The sequence spans 316 residues: Phosphatidylglycerol--prolipoprotein diacylglyceryl transferase (316 aa).

A run of 3 helical transmembrane segments spans residues 18-38 (PIPI…AIWL), 47-67 (GGNP…GIIG), and 95-115 (NGGL…AVFF). Arginine 141 contacts a 1,2-diacyl-sn-glycero-3-phospho-(1'-sn-glycerol). 2 helical membrane passes run 188–208 (VHPT…LLMW) and 251–271 (INTI…FLLK). The disordered stretch occupies residues 292 to 316 (AVASPDGKPLPKAGEGIDGETPSTR).

The protein belongs to the Lgt family.

The protein localises to the cell membrane. The catalysed reaction is L-cysteinyl-[prolipoprotein] + a 1,2-diacyl-sn-glycero-3-phospho-(1'-sn-glycerol) = an S-1,2-diacyl-sn-glyceryl-L-cysteinyl-[prolipoprotein] + sn-glycerol 1-phosphate + H(+). The protein operates within protein modification; lipoprotein biosynthesis (diacylglyceryl transfer). Catalyzes the transfer of the diacylglyceryl group from phosphatidylglycerol to the sulfhydryl group of the N-terminal cysteine of a prolipoprotein, the first step in the formation of mature lipoproteins. The chain is Phosphatidylglycerol--prolipoprotein diacylglyceryl transferase from Corynebacterium glutamicum (strain ATCC 13032 / DSM 20300 / JCM 1318 / BCRC 11384 / CCUG 27702 / LMG 3730 / NBRC 12168 / NCIMB 10025 / NRRL B-2784 / 534).